The chain runs to 543 residues: CBS domain-containing protein CBSCBSPB1 (543 aa).

The disordered stretch occupies residues 1-35 (MASQGGPRRSLSVTTASLHGKKKSMDMAERGLDTG). Serine 17 is modified (phosphoserine). Basic and acidic residues predominate over residues 23–35 (KSMDMAERGLDTG). 4 consecutive CBS domains span residues 59–118 (RLSK…NVEE), 125–183 (MTKN…RAAE), 225–285 (IIPD…LPPS), and 293–350 (MTQN…AGTT). A disordered region spans residues 372–393 (LSPNEDDEDSRSESSMKVASEA). The 88-residue stretch at 402–489 (ANTFSFKIED…KSLRLHLDDS (88 aa)) folds into the PB1 domain. The chain crosses the membrane as a helical span at residues 518 to 538 (AYSGVAAGAALVAGLGFMAFL).

It is found in the membrane. This is CBS domain-containing protein CBSCBSPB1 (CBSCBSPB1) from Arabidopsis thaliana (Mouse-ear cress).